We begin with the raw amino-acid sequence, 812 residues long: Phospholipase D alpha 2 (812 aa).

Positions M1–S36 are excised as a propeptide. The C2 domain occupies M1 to V127. One can recognise a PLD phosphodiesterase 1 domain in the interval A328–R368. Residues H333, K335, and D340 contribute to the active site. Residue H333 coordinates a 1,2-diacyl-sn-glycero-3-phosphate. H374 contributes to the Ca(2+) binding site. A 1,2-diacyl-sn-glycero-3-phosphate is bound by residues Q524 and H663. A PLD phosphodiesterase 2 domain is found at F658–S685. Catalysis depends on residues H663, K665, and D670. E724 is a binding site for Ca(2+).

Belongs to the phospholipase D family. C2-PLD subfamily. Ca(2+) is required as a cofactor.

It localises to the cytoplasm. Its subcellular location is the membrane. The enzyme catalyses a 1,2-diacyl-sn-glycero-3-phosphocholine + H2O = a 1,2-diacyl-sn-glycero-3-phosphate + choline + H(+). Hydrolyzes glycerol-phospholipids at the terminal phosphodiesteric bond. Plays an important role in various cellular processes, including phytohormone action, vesicular trafficking, secretion, cytoskeletal arrangement, meiosis, tumor promotion, pathogenesis, membrane deterioration and senescence. The polypeptide is Phospholipase D alpha 2 (PLD2) (Brassica oleracea var. capitata (Cabbage)).